The primary structure comprises 118 residues: NADH-ubiquinone oxidoreductase chain 3 (118 aa).

3 consecutive transmembrane segments (helical) span residues 7-27 (IFIY…LPFL), 62-82 (LVSI…PWAV), and 87-107 (IDLF…IGFL).

Belongs to the complex I subunit 3 family.

It is found in the mitochondrion membrane. The catalysed reaction is a ubiquinone + NADH + 5 H(+)(in) = a ubiquinol + NAD(+) + 4 H(+)(out). Functionally, core subunit of the mitochondrial membrane respiratory chain NADH dehydrogenase (Complex I) that is believed to belong to the minimal assembly required for catalysis. Complex I functions in the transfer of electrons from NADH to the respiratory chain. The immediate electron acceptor for the enzyme is believed to be ubiquinone. This Allium cepa (Onion) protein is NADH-ubiquinone oxidoreductase chain 3 (ND3).